Reading from the N-terminus, the 38-residue chain is Small ribosomal subunit protein uS12c (38 aa).

The disordered stretch occupies residues 1–26; that stretch reads MPTIQQLIRNARQPIENRKKSPALRG.

This sequence belongs to the universal ribosomal protein uS12 family. As to quaternary structure, part of the 30S ribosomal subunit.

It localises to the plastid. The protein localises to the chloroplast. Functionally, with S4 and S5 plays an important role in translational accuracy. Located at the interface of the 30S and 50S subunits. This Pinus contorta (Shore pine) protein is Small ribosomal subunit protein uS12c (rps12).